We begin with the raw amino-acid sequence, 159 residues long: Ribosomal RNA large subunit methyltransferase H (159 aa).

Residues glycine 108 and 127-132 (FSKMTF) each bind S-adenosyl-L-methionine.

It belongs to the RNA methyltransferase RlmH family. In terms of assembly, homodimer.

It is found in the cytoplasm. The catalysed reaction is pseudouridine(1915) in 23S rRNA + S-adenosyl-L-methionine = N(3)-methylpseudouridine(1915) in 23S rRNA + S-adenosyl-L-homocysteine + H(+). Its function is as follows. Specifically methylates the pseudouridine at position 1915 (m3Psi1915) in 23S rRNA. In Clostridium acetobutylicum (strain ATCC 824 / DSM 792 / JCM 1419 / IAM 19013 / LMG 5710 / NBRC 13948 / NRRL B-527 / VKM B-1787 / 2291 / W), this protein is Ribosomal RNA large subunit methyltransferase H.